The primary structure comprises 506 residues: RNA-splicing ligase RtcB homolog (506 aa).

Residues Asp120, Cys123, His228, His260, and His354 each coordinate Mn(2+). 227-231 lines the GMP pocket; sequence NHYAE. GMP is bound by residues 354–355, 403–406, Ser410, 429–432, and Lys505; these read HN, GGTM, and HGAG. His429 acts as the GMP-histidine intermediate in catalysis.

It belongs to the RtcB family. As to quaternary structure, catalytic component of the tRNA-splicing ligase complex. The cofactor is Mn(2+).

It carries out the reaction a 3'-end 3'-phospho-ribonucleotide-RNA + a 5'-end dephospho-ribonucleoside-RNA + GTP = a ribonucleotidyl-ribonucleotide-RNA + GMP + diphosphate. The catalysed reaction is a 3'-end 2',3'-cyclophospho-ribonucleotide-RNA + a 5'-end dephospho-ribonucleoside-RNA + GTP + H2O = a ribonucleotidyl-ribonucleotide-RNA + GMP + diphosphate + H(+). In terms of biological role, catalytic subunit of the tRNA-splicing ligase complex that acts by directly joining spliced tRNA halves to mature-sized tRNAs by incorporating the precursor-derived splice junction phosphate into the mature tRNA as a canonical 3',5'-phosphodiester. May act as an RNA ligase with broad substrate specificity, and may function toward other RNAs. The protein is RNA-splicing ligase RtcB homolog of Plasmodium falciparum (isolate 3D7).